We begin with the raw amino-acid sequence, 314 residues long: (-)-isopiperitenone reductase (314 aa).

10-33 (VTGANKGIGFEICRQLAEKGIIVI) contacts NADP(+). Position 182 (S182) interacts with substrate.

Belongs to the short-chain dehydrogenases/reductases (SDR) family.

It is found in the cytoplasm. The catalysed reaction is (2R,5R)-isopulegone + NADP(+) = (6R)-isopiperitenone + NADPH + H(+). The protein operates within secondary metabolite biosynthesis; terpenoid biosynthesis. Functionally, monoterpene synthase that catalyzes the specific reduction of the 1(2)-double bond of (-)-isopiperitenone to produce (+)-cis-isopulegone. Does not catalyze the reverse reaction. Unable to reduce (+)-pulegone, (+)-cis-isopulegone, (-)-menthone or the 1,2-double bond of (-)-carvone. Able to utilize NADH with 20% the efficiency of NADPH. The chain is (-)-isopiperitenone reductase from Mentha piperita (Peppermint).